The chain runs to 62 residues: MLQVVQEGNPAPFIINTVKRGRRDRERQRTPWAPHPLGFQGRRYIYESPNHRGKDSSFLAQK.

This is an uncharacterized protein from Homo sapiens (Human).